The chain runs to 83 residues: Weak neurotoxin WNTX33 (83 aa).

Residues 1–21 (MKTLLLTLVVVTIVCLDLGYS) form the signal peptide. 4 disulfide bridges follow: C24/C45, C38/C62, C64/C75, and C76/C81.

Belongs to the three-finger toxin family. Short-chain subfamily. As to expression, expressed by the venom gland.

Its subcellular location is the secreted. In Ophiophagus hannah (King cobra), this protein is Weak neurotoxin WNTX33.